The sequence spans 582 residues: L-fucose isomerase (582 aa).

Active-site proton acceptor residues include E333 and D357. Mn(2+)-binding residues include E333, D357, and H520.

It belongs to the L-fucose isomerase family. Mn(2+) serves as cofactor.

Its subcellular location is the cytoplasm. The catalysed reaction is L-fucose = L-fuculose. The protein operates within carbohydrate degradation; L-fucose degradation; L-lactaldehyde and glycerone phosphate from L-fucose: step 1/3. Functionally, converts the aldose L-fucose into the corresponding ketose L-fuculose. This is L-fucose isomerase from Vibrio vulnificus (strain YJ016).